We begin with the raw amino-acid sequence, 204 residues long: 3-isopropylmalate dehydratase small subunit (204 aa).

This sequence belongs to the LeuD family. LeuD type 1 subfamily. In terms of assembly, heterodimer of LeuC and LeuD.

It catalyses the reaction (2R,3S)-3-isopropylmalate = (2S)-2-isopropylmalate. It functions in the pathway amino-acid biosynthesis; L-leucine biosynthesis; L-leucine from 3-methyl-2-oxobutanoate: step 2/4. Catalyzes the isomerization between 2-isopropylmalate and 3-isopropylmalate, via the formation of 2-isopropylmaleate. The sequence is that of 3-isopropylmalate dehydratase small subunit from Clavibacter michiganensis subsp. michiganensis (strain NCPPB 382).